The chain runs to 132 residues: Small ribosomal subunit protein uS8 (132 aa).

Belongs to the universal ribosomal protein uS8 family. In terms of assembly, part of the 30S ribosomal subunit. Contacts proteins S5 and S12.

One of the primary rRNA binding proteins, it binds directly to 16S rRNA central domain where it helps coordinate assembly of the platform of the 30S subunit. The sequence is that of Small ribosomal subunit protein uS8 from Rickettsia rickettsii (strain Sheila Smith).